Consider the following 379-residue polypeptide: Putative acetyl-CoA C-acetyltransferase VraB (379 aa).

Cysteine 86 (acyl-thioester intermediate) is an active-site residue. Residue histidine 338 is the Proton acceptor of the active site.

This sequence belongs to the thiolase-like superfamily. Thiolase family.

The protein is Putative acetyl-CoA C-acetyltransferase VraB (vraB) of Staphylococcus aureus (strain COL).